The primary structure comprises 432 residues: Serine hydroxymethyltransferase (432 aa).

(6S)-5,6,7,8-tetrahydrofolate is bound by residues L131 and 135 to 137 (GHL). Residue K240 is modified to N6-(pyridoxal phosphate)lysine.

It belongs to the SHMT family. As to quaternary structure, homodimer. Requires pyridoxal 5'-phosphate as cofactor.

It is found in the cytoplasm. The enzyme catalyses (6R)-5,10-methylene-5,6,7,8-tetrahydrofolate + glycine + H2O = (6S)-5,6,7,8-tetrahydrofolate + L-serine. The protein operates within one-carbon metabolism; tetrahydrofolate interconversion. It participates in amino-acid biosynthesis; glycine biosynthesis; glycine from L-serine: step 1/1. In terms of biological role, catalyzes the reversible interconversion of serine and glycine with tetrahydrofolate (THF) serving as the one-carbon carrier. This reaction serves as the major source of one-carbon groups required for the biosynthesis of purines, thymidylate, methionine, and other important biomolecules. Also exhibits THF-independent aldolase activity toward beta-hydroxyamino acids, producing glycine and aldehydes, via a retro-aldol mechanism. The chain is Serine hydroxymethyltransferase from Bradyrhizobium diazoefficiens (strain JCM 10833 / BCRC 13528 / IAM 13628 / NBRC 14792 / USDA 110).